Consider the following 289-residue polypeptide: RNA exonuclease 4 (289 aa).

Positions 1–24 are enriched in polar residues; that stretch reads MALSSNWQALLASESNPTSNGKNK. Residues 1–34 form a disordered region; that stretch reads MALSSNWQALLASESNPTSNGKNKQSNRKIRNVK. Residues 25–34 are compositionally biased toward basic residues; sequence QSNRKIRNVK. An Exonuclease domain is found at 121 to 273; it reads YIAMDCEFVG…EDARATMLLY (153 aa).

It belongs to the REXO4 family.

Its subcellular location is the nucleus. Exoribonuclease involved in ribosome biosynthesis. Involved in the processing of ITS1, the internal transcribed spacer localized between the 18S and 5.8S rRNAs. This chain is RNA exonuclease 4 (REX4), found in Saccharomyces cerevisiae (strain ATCC 204508 / S288c) (Baker's yeast).